A 312-amino-acid chain; its full sequence is Aspartate carbamoyltransferase catalytic subunit (312 aa).

Residues Arg58 and Thr59 each coordinate carbamoyl phosphate. Residue Lys86 coordinates L-aspartate. Carbamoyl phosphate-binding residues include Arg108, His136, and Gln139. Positions 169 and 223 each coordinate L-aspartate. The carbamoyl phosphate site is built by Gly264 and Pro265.

This sequence belongs to the aspartate/ornithine carbamoyltransferase superfamily. ATCase family. In terms of assembly, heterododecamer (2C3:3R2) of six catalytic PyrB chains organized as two trimers (C3), and six regulatory PyrI chains organized as three dimers (R2).

The catalysed reaction is carbamoyl phosphate + L-aspartate = N-carbamoyl-L-aspartate + phosphate + H(+). It participates in pyrimidine metabolism; UMP biosynthesis via de novo pathway; (S)-dihydroorotate from bicarbonate: step 2/3. Functionally, catalyzes the condensation of carbamoyl phosphate and aspartate to form carbamoyl aspartate and inorganic phosphate, the committed step in the de novo pyrimidine nucleotide biosynthesis pathway. The polypeptide is Aspartate carbamoyltransferase catalytic subunit (Heliobacterium modesticaldum (strain ATCC 51547 / Ice1)).